The chain runs to 198 residues: Glycerol-3-phosphate acyltransferase (198 aa).

6 helical membrane-spanning segments follow: residues 5 to 25 (YLII…SIAI), 55 to 75 (VGLA…YLGF), 79 to 99 (GSLG…LPVL), 114 to 134 (VLLF…LIVV), 139 to 159 (YVSL…LIYI), and 164 to 184 (YIGL…RSNI).

Belongs to the PlsY family. As to quaternary structure, probably interacts with PlsX.

The protein localises to the cell membrane. It carries out the reaction an acyl phosphate + sn-glycerol 3-phosphate = a 1-acyl-sn-glycero-3-phosphate + phosphate. The protein operates within lipid metabolism; phospholipid metabolism. In terms of biological role, catalyzes the transfer of an acyl group from acyl-phosphate (acyl-PO(4)) to glycerol-3-phosphate (G3P) to form lysophosphatidic acid (LPA). This enzyme utilizes acyl-phosphate as fatty acyl donor, but not acyl-CoA or acyl-ACP. This Finegoldia magna (strain ATCC 29328 / DSM 20472 / WAL 2508) (Peptostreptococcus magnus) protein is Glycerol-3-phosphate acyltransferase.